The following is a 515-amino-acid chain: tRNA pseudouridine synthase Pus10 (515 aa).

Residues Cys21 and Cys24 each contribute to the Zn(2+) site. Residues 42–85 (KEVTYELQKYLSHGDPAEENDTPPSKKAKIEEDTSSNEHLGNCE) adopt a coiled-coil conformation. Residues 55–82 (GDPAEENDTPPSKKAKIEEDTSSNEHLG) are disordered. Cys96 and Cys99 together coordinate Zn(2+). The RNA binding forefinger loop stretch occupies residues 291 to 304 (TPWIIDGERKIESS). Asp331 (nucleophile) is an active-site residue. Residues 428–443 (QKTPLRVLHRRPLASR) form an RNA binding thumb loop region.

Belongs to the pseudouridine synthase Pus10 family.

It localises to the nucleus. Its subcellular location is the cytoplasm. The protein resides in the mitochondrion. The catalysed reaction is uridine(55) in tRNA = pseudouridine(55) in tRNA. It catalyses the reaction uridine(54) in tRNA = pseudouridine(54) in tRNA. Protein with different functions depending on its subcellular location: involved in miRNA processing in the nucleus and acts as a tRNA pseudouridylate synthase in the cytoplasm. In the cytoplasm, acts as a pseudouridylate synthase by catalyzing synthesis of pseudouridine(54) and pseudouridine(55) from uracil-54 and uracil-55, respectively, in the psi GC loop of a subset of tRNAs. tRNA pseudouridylate synthase activity is enhanced by the presence of 1-methyladenosine at position 53-61 of tRNAs. Does not show tRNA pseudouridylate synthase activity in the nucleus. In the nucleus, promotes primary microRNAs (pri-miRNAs) processing independently of its RNA pseudouridylate synthase activity. Binds pri-miRNAs. This chain is tRNA pseudouridine synthase Pus10, found in Xenopus laevis (African clawed frog).